We begin with the raw amino-acid sequence, 473 residues long: Photosystem II CP43 reaction center protein (473 aa).

Positions methionine 1–glutamate 14 are excised as a propeptide. Threonine 15 bears the N-acetylthreonine mark. Position 15 is a phosphothreonine (threonine 15). Helical transmembrane passes span leucine 69–alanine 93, leucine 134–asparagine 155, lysine 178–threonine 200, lysine 255–serine 275, and tryptophan 291–alanine 312. Glutamate 367 contributes to the [CaMn4O5] cluster binding site. Residues leucine 426–asparagine 473 constitute a propeptide that is removed on maturation. Residues arginine 447 to proline 471 form a helical membrane-spanning segment.

This sequence belongs to the PsbB/PsbC family. PsbC subfamily. In terms of assembly, PSII is composed of 1 copy each of membrane proteins PsbA, PsbB, PsbC, PsbD, PsbE, PsbF, PsbH, PsbI, PsbJ, PsbK, PsbL, PsbM, PsbT, PsbX, PsbY, PsbZ, Psb30/Ycf12, at least 3 peripheral proteins of the oxygen-evolving complex and a large number of cofactors. It forms dimeric complexes. Binds multiple chlorophylls and provides some of the ligands for the Ca-4Mn-5O cluster of the oxygen-evolving complex. It may also provide a ligand for a Cl- that is required for oxygen evolution. PSII binds additional chlorophylls, carotenoids and specific lipids. is required as a cofactor. Over time a tryptophan in the fifth lumenal loop is converted to 2-hydroxy-2,3-dihydrotryptophan, 2-oxo-2,3-dihydrotryptophan, and kynurenine by oxidizing species from the active site. This oxidation targets the protein for turnover.

The protein resides in the plastid. The protein localises to the chloroplast thylakoid membrane. Functionally, one of the components of the core complex of photosystem II (PSII). It binds chlorophyll and helps catalyze the primary light-induced photochemical processes of PSII. PSII is a light-driven water:plastoquinone oxidoreductase, using light energy to abstract electrons from H(2)O, generating O(2) and a proton gradient subsequently used for ATP formation. This is Photosystem II CP43 reaction center protein from Spinacia oleracea (Spinach).